Consider the following 252-residue polypeptide: Imidazole glycerol phosphate synthase subunit HisF (252 aa).

Active-site residues include aspartate 11 and aspartate 130.

Belongs to the HisA/HisF family. As to quaternary structure, heterodimer of HisH and HisF.

Its subcellular location is the cytoplasm. The catalysed reaction is 5-[(5-phospho-1-deoxy-D-ribulos-1-ylimino)methylamino]-1-(5-phospho-beta-D-ribosyl)imidazole-4-carboxamide + L-glutamine = D-erythro-1-(imidazol-4-yl)glycerol 3-phosphate + 5-amino-1-(5-phospho-beta-D-ribosyl)imidazole-4-carboxamide + L-glutamate + H(+). Its pathway is amino-acid biosynthesis; L-histidine biosynthesis; L-histidine from 5-phospho-alpha-D-ribose 1-diphosphate: step 5/9. In terms of biological role, IGPS catalyzes the conversion of PRFAR and glutamine to IGP, AICAR and glutamate. The HisF subunit catalyzes the cyclization activity that produces IGP and AICAR from PRFAR using the ammonia provided by the HisH subunit. This chain is Imidazole glycerol phosphate synthase subunit HisF, found in Streptococcus gordonii (strain Challis / ATCC 35105 / BCRC 15272 / CH1 / DL1 / V288).